Here is a 23-residue protein sequence, read N- to C-terminus: Aurein-4.4 (23 aa).

The protein belongs to the frog skin active peptide (FSAP) family. Aurein subfamily. In terms of tissue distribution, expressed by the skin dorsal glands.

It localises to the secreted. Functionally, has no antimicrobial or anticancer activity. The protein is Aurein-4.4 of Ranoidea aurea (Green and golden bell frog).